The primary structure comprises 572 residues: Isocitrate dehydrogenase kinase/phosphatase (572 aa).

ATP contacts are provided by residues 317 to 323 and Lys338; that span reads APGVRGM. Residue Asp373 is part of the active site.

The protein belongs to the AceK family.

The protein resides in the cytoplasm. It carries out the reaction L-seryl-[isocitrate dehydrogenase] + ATP = O-phospho-L-seryl-[isocitrate dehydrogenase] + ADP + H(+). In terms of biological role, bifunctional enzyme which can phosphorylate or dephosphorylate isocitrate dehydrogenase (IDH) on a specific serine residue. This is a regulatory mechanism which enables bacteria to bypass the Krebs cycle via the glyoxylate shunt in response to the source of carbon. When bacteria are grown on glucose, IDH is fully active and unphosphorylated, but when grown on acetate or ethanol, the activity of IDH declines drastically concomitant with its phosphorylation. This chain is Isocitrate dehydrogenase kinase/phosphatase, found in Ectopseudomonas mendocina (strain ymp) (Pseudomonas mendocina).